We begin with the raw amino-acid sequence, 508 residues long: Photosystem II CP47 reaction center protein (508 aa).

6 helical membrane-spanning segments follow: residues 21–36 (SVHL…WAGS), 101–115 (IVLS…IWHW), 140–156 (GIHL…FGAF), 203–218 (IAAG…FHLS), 237–252 (VLSS…AFVV), and 457–472 (TFAL…HGAR).

The protein belongs to the PsbB/PsbC family. PsbB subfamily. In terms of assembly, PSII is composed of 1 copy each of membrane proteins PsbA, PsbB, PsbC, PsbD, PsbE, PsbF, PsbH, PsbI, PsbJ, PsbK, PsbL, PsbM, PsbT, PsbX, PsbY, PsbZ, Psb30/Ycf12, at least 3 peripheral proteins of the oxygen-evolving complex and a large number of cofactors. It forms dimeric complexes. Binds multiple chlorophylls. PSII binds additional chlorophylls, carotenoids and specific lipids. serves as cofactor.

The protein resides in the plastid. Its subcellular location is the chloroplast thylakoid membrane. In terms of biological role, one of the components of the core complex of photosystem II (PSII). It binds chlorophyll and helps catalyze the primary light-induced photochemical processes of PSII. PSII is a light-driven water:plastoquinone oxidoreductase, using light energy to abstract electrons from H(2)O, generating O(2) and a proton gradient subsequently used for ATP formation. This Angiopteris evecta (Mule's foot fern) protein is Photosystem II CP47 reaction center protein.